A 274-amino-acid chain; its full sequence is Protein CURLY FLAG LEAF 1 (274 aa).

The disordered stretch occupies residues 17–44 (SLNGGGGGGGGRRRGRRAAAAEGSDDSE). Residues 47-52 (TVELNS) carry the EAR motif. Residues 54-88 (VALPYHWEQCLDIRTGQVYYINWEDGTRTTIDPRS) form the WW domain. 2 disordered regions span residues 83–133 (TIDP…SGYT) and 175–216 (GRDG…SPTD). Low complexity-rich tracts occupy residues 87 to 106 (RSSSAYSPSPASRSASSSSR), 121 to 133 (AAAASTTTSSGYT), and 184 to 207 (SSSSSSSSSSSSSASSSRGSAVSS).

Binds to HDG1.

Its function is as follows. Negatively regulates the cuticle development probably by interacting with the HD-ZIP IV transcription factor HDG1. The polypeptide is Protein CURLY FLAG LEAF 1 (Oryza sativa subsp. japonica (Rice)).